We begin with the raw amino-acid sequence, 453 residues long: tRNA-2-methylthio-N(6)-dimethylallyladenosine synthase (453 aa).

In terms of domain architecture, MTTase N-terminal spans 7–123; the sequence is GTYWITTFGC…LDTLLSQVEA (117 aa). Residues Cys16, Cys52, Cys86, Cys158, Cys162, and Cys165 each contribute to the [4Fe-4S] cluster site. The Radical SAM core domain occupies 144-381; sequence RDSSLCAWVN…NALVERKAKA (238 aa). The TRAM domain occupies 384–447; sequence QRYLGRVEEV…AFSLSGSAQA (64 aa).

It belongs to the methylthiotransferase family. MiaB subfamily. As to quaternary structure, monomer. It depends on [4Fe-4S] cluster as a cofactor.

The protein resides in the cytoplasm. It catalyses the reaction N(6)-dimethylallyladenosine(37) in tRNA + (sulfur carrier)-SH + AH2 + 2 S-adenosyl-L-methionine = 2-methylsulfanyl-N(6)-dimethylallyladenosine(37) in tRNA + (sulfur carrier)-H + 5'-deoxyadenosine + L-methionine + A + S-adenosyl-L-homocysteine + 2 H(+). Functionally, catalyzes the methylthiolation of N6-(dimethylallyl)adenosine (i(6)A), leading to the formation of 2-methylthio-N6-(dimethylallyl)adenosine (ms(2)i(6)A) at position 37 in tRNAs that read codons beginning with uridine. This is tRNA-2-methylthio-N(6)-dimethylallyladenosine synthase from Synechococcus sp. (strain RCC307).